The sequence spans 364 residues: MTEKINLFDYTPKALADWFVAQGEQPFRAKQVLKWLYHERVYDFERMTDLSKKLRAMLSEKACVILPQVIADKTARDGTRKWVFQYACTNSIEAVFIPEDDRGTLCISSQAGCALACPFCSTARAGFNRNLTTGEIVVQVWLAKELVHCERNGNSRLITNVVLMGMGEPLINFNQVLPATEIFMSDWGFGLSKRRVTLSTSGVVPAIHKLREVTDLSLAVSLHAPNDELRNKIVPINQRYGLKALIEACALYAENNKQHGGITWEYVMLKGVNDTLEHAQQLADLLRNVPGKINLIPFNEFPNSPFQCSSWEDIVRFQQFLQKAGYIATIRKTRGDDIDAACGQLVGRVNDRIRRERQFQGFKA.

Glu93 acts as the Proton acceptor in catalysis. Residues 99-337 form the Radical SAM core domain; it reads EDDRGTLCIS…ATIRKTRGDD (239 aa). Cys106 and Cys342 are oxidised to a cystine. Positions 113, 117, and 120 each coordinate [4Fe-4S] cluster. Residues 167–168, Ser199, 221–223, and Asn299 contribute to the S-adenosyl-L-methionine site; these read GE and SLH. Cys342 (S-methylcysteine intermediate) is an active-site residue.

It belongs to the radical SAM superfamily. RlmN family. [4Fe-4S] cluster serves as cofactor.

It is found in the cytoplasm. The enzyme catalyses adenosine(2503) in 23S rRNA + 2 reduced [2Fe-2S]-[ferredoxin] + 2 S-adenosyl-L-methionine = 2-methyladenosine(2503) in 23S rRNA + 5'-deoxyadenosine + L-methionine + 2 oxidized [2Fe-2S]-[ferredoxin] + S-adenosyl-L-homocysteine. The catalysed reaction is adenosine(37) in tRNA + 2 reduced [2Fe-2S]-[ferredoxin] + 2 S-adenosyl-L-methionine = 2-methyladenosine(37) in tRNA + 5'-deoxyadenosine + L-methionine + 2 oxidized [2Fe-2S]-[ferredoxin] + S-adenosyl-L-homocysteine. Functionally, specifically methylates position 2 of adenine 2503 in 23S rRNA and position 2 of adenine 37 in tRNAs. m2A2503 modification seems to play a crucial role in the proofreading step occurring at the peptidyl transferase center and thus would serve to optimize ribosomal fidelity. In Dichelobacter nodosus (strain VCS1703A), this protein is Dual-specificity RNA methyltransferase RlmN.